Here is a 96-residue protein sequence, read N- to C-terminus: Large ribosomal subunit protein eL43 (96 aa).

The C4-type zinc finger occupies 39-60 (CTFCGKTATKRTCVGIWKCKKC).

Belongs to the eukaryotic ribosomal protein eL43 family. Component of the large ribosomal subunit. Mature ribosomes consist of a small (40S) and a large (60S) subunit. The 40S subunit contains about 32 different proteins and 1 molecule of RNA (18S). The 60S subunit contains about 42 different proteins and 3 molecules of RNA (28S, 5.8S and 5S).

The protein localises to the cytoplasm. Functionally, component of the ribosome, a large ribonucleoprotein complex responsible for the synthesis of proteins in the cell. The small ribosomal subunit (SSU) binds messenger RNAs (mRNAs) and translates the encoded message by selecting cognate aminoacyl-transfer RNA (tRNA) molecules. The large subunit (LSU) contains the ribosomal catalytic site termed the peptidyl transferase center (PTC), which catalyzes the formation of peptide bonds, thereby polymerizing the amino acids delivered by tRNAs into a polypeptide chain. The nascent polypeptides leave the ribosome through a tunnel in the LSU and interact with protein factors that function in enzymatic processing, targeting, and the membrane insertion of nascent chains at the exit of the ribosomal tunnel. The chain is Large ribosomal subunit protein eL43 from Plasmodium falciparum (isolate 3D7).